The following is an 83-amino-acid chain: Small ribosomal subunit protein uS17 (83 aa).

This sequence belongs to the universal ribosomal protein uS17 family. Part of the 30S ribosomal subunit.

Functionally, one of the primary rRNA binding proteins, it binds specifically to the 5'-end of 16S ribosomal RNA. The polypeptide is Small ribosomal subunit protein uS17 (Pseudoalteromonas atlantica (strain T6c / ATCC BAA-1087)).